A 119-amino-acid chain; its full sequence is Chorion class B protein M2807 (119 aa).

Positions 1 to 11 (GGLGGGCGRGF) are left arm. Residues 12-80 (SGGGLPVATA…GNGAVGITRE (69 aa)) are central domain. The right arm (Gly-rich tandem repeats) stretch occupies residues 81 to 119 (GGLGYGAGYGDGYGLGYGGYGGGYGLGYGGYGGCGCGCG).

It belongs to the chorion protein family.

In terms of biological role, this protein is one of many from the eggshell of the silk moth. This is Chorion class B protein M2807 from Bombyx mori (Silk moth).